The primary structure comprises 378 residues: MTKPQPIPFGKSDLFSLGVEVELQIIHPETRNLFPISPDILEEWSLQSPHLKPEVFQSMLEIDTPICKNVQEVEYELLLTSRELLRICKKHGARLASNGTHPFAKWHHRIFYPSDRYEYLLERNQHIARRLMIYGLHVHLGMKDGDHCIAMMNEFLYYLPHMLAMSASSPFWTGHDTGLASSRITVFEAHPAGGTPCRVENWAQFEDIVQKLTRSNSIGSFKDIWWDIRPSPNYGTLEIRICDGVPGIRKTTRLVAFIHLLAKHLQKRLEQGIRRQTPDDWMVRENKWRASRHGLDCEVLIDNDGMTKNLREDIKDLLAAMKEDAAEMGYTEYLKQLVEEDLTHPSYEIQRALFEKTGSLEHVVDSLCDVFEKDLDVV.

It belongs to the glutamate--cysteine ligase type 2 family. YbdK subfamily.

The enzyme catalyses L-cysteine + L-glutamate + ATP = gamma-L-glutamyl-L-cysteine + ADP + phosphate + H(+). ATP-dependent carboxylate-amine ligase which exhibits weak glutamate--cysteine ligase activity. This Bdellovibrio bacteriovorus (strain ATCC 15356 / DSM 50701 / NCIMB 9529 / HD100) protein is Putative glutamate--cysteine ligase 2.